Here is a 95-residue protein sequence, read N- to C-terminus: Putative pterin-4-alpha-carbinolamine dehydratase (95 aa).

This sequence belongs to the pterin-4-alpha-carbinolamine dehydratase family.

The catalysed reaction is (4aS,6R)-4a-hydroxy-L-erythro-5,6,7,8-tetrahydrobiopterin = (6R)-L-erythro-6,7-dihydrobiopterin + H2O. This is Putative pterin-4-alpha-carbinolamine dehydratase from Prochlorococcus marinus (strain NATL2A).